A 259-amino-acid polypeptide reads, in one-letter code: Putative zinc metalloprotease Rip2 (259 aa).

Helical transmembrane passes span 14–34 (PIFL…WIAA) and 39–59 (PLSY…SLCL). His60 contacts Zn(2+). Glu61 is a catalytic residue. Zn(2+) is bound at residue His64. 4 helical membrane-spanning segments follow: residues 96-116 (LGLP…GAVY), 129-149 (IVSL…LGLT), 159-179 (VFWS…VLNL), and 203-223 (LAPA…TPAL).

The protein belongs to the peptidase M50B family. It depends on Zn(2+) as a cofactor.

The protein resides in the cell membrane. This chain is Putative zinc metalloprotease Rip2 (rip2), found in Mycolicibacterium smegmatis (strain ATCC 700084 / mc(2)155) (Mycobacterium smegmatis).